Consider the following 268-residue polypeptide: Adenosylcobinamide-GDP ribazoletransferase (268 aa).

Helical transmembrane passes span 54-74, 80-100, 124-144, 150-170, 202-222, and 243-263; these read IAGLVIGGILAAVGWGAGVLW, AVVLVVAWGVLTAGMHLDGLS, IGVMGALALAAVLGLKAAFLA, WLTAVVLAPVLGRWADVYGIV, ALALIVGGVGGLIALALVWMV, and GALCEIAEVVALATLTLSAPM.

This sequence belongs to the CobS family. Mg(2+) is required as a cofactor.

Its subcellular location is the cell membrane. It carries out the reaction alpha-ribazole + adenosylcob(III)inamide-GDP = adenosylcob(III)alamin + GMP + H(+). It catalyses the reaction alpha-ribazole 5'-phosphate + adenosylcob(III)inamide-GDP = adenosylcob(III)alamin 5'-phosphate + GMP + H(+). Its pathway is cofactor biosynthesis; adenosylcobalamin biosynthesis; adenosylcobalamin from cob(II)yrinate a,c-diamide: step 7/7. Functionally, joins adenosylcobinamide-GDP and alpha-ribazole to generate adenosylcobalamin (Ado-cobalamin). Also synthesizes adenosylcobalamin 5'-phosphate from adenosylcobinamide-GDP and alpha-ribazole 5'-phosphate. This is Adenosylcobinamide-GDP ribazoletransferase from Roseiflexus sp. (strain RS-1).